Reading from the N-terminus, the 2157-residue chain is Polyketide synthase 2 (2157 aa).

The segment at F7–H244 is N-terminal acylcarrier protein transacylase domain (SAT). The Ketosynthase family 3 (KS3) domain occupies D374–D807. Residues C546, H681, and H723 each act as for beta-ketoacyl synthase activity in the active site. Residues G908 to W1213 form a malonyl-CoA:ACP transacylase (MAT) domain region. S998 (for acyl/malonyl transferase activity) is an active-site residue. Residues T1290–P1605 are product template (PT) domain. The tract at residues Q1294 to S1428 is N-terminal hotdog fold. Positions Q1294–N1600 constitute a PKS/mFAS DH domain. Residue H1327 is the Proton acceptor; for dehydratase activity of the active site. The C-terminal hotdog fold stretch occupies residues T1455–N1600. The active-site Proton donor; for dehydratase activity is the D1514. The tract at residues A1626 to T1652 is disordered. Residues A1643 to T1652 are compositionally biased toward polar residues. In terms of domain architecture, Carrier 1 spans S1649–Q1726. At S1686 the chain carries O-(pantetheine 4'-phosphoryl)serine. The interval A1733–T1762 is disordered. Positions E1735 to V1755 are enriched in polar residues. One can recognise a Carrier 2 domain in the interval D1765 to E1839. S1799 carries the O-(pantetheine 4'-phosphoryl)serine modification. Positions A1840 to E1859 are disordered. Residues A1875–E2151 are thioesterase (TE) domain. S1981 serves as the catalytic For thioesterase activity.

In terms of biological role, polyketide synthase; part of the Pks2 gene cluster that mediates the formation of infectious structures (appressoria), enabling these fungi to kill insects faster. The product of the Pks2 gene cluster is different from the one of Pks1 and has still not been identified. In Metarhizium robertsii (strain ARSEF 23 / ATCC MYA-3075) (Metarhizium anisopliae (strain ARSEF 23)), this protein is Polyketide synthase 2.